Consider the following 612-residue polypeptide: Glycosyltransferase 25 family member (612 aa).

The first 20 residues, 1-20 (MNKQVIFGLLLACILVCISG), serve as a signal peptide directing secretion. Asn106, Asn227, Asn263, and Asn524 each carry an N-linked (GlcNAc...) asparagine glycan. Residues 609-612 (HQEL) carry the Prevents secretion from ER motif.

The protein belongs to the glycosyltransferase 25 family.

The protein resides in the endoplasmic reticulum lumen. This Drosophila melanogaster (Fruit fly) protein is Glycosyltransferase 25 family member.